The primary structure comprises 944 residues: Spindle pole body component 110 (944 aa).

T18 is modified (phosphothreonine). The disordered stretch occupies residues 23 to 110; the sequence is IKSKRNTTQT…RKRNLIDDLK (88 aa). Residues 28–46 show a composition bias toward polar residues; it reads NTTQTQVVSPTKVPNANNG. The Nuclear localization signal signature appears at 54–59; the sequence is KKRQRR. S60 carries the post-translational modification Phosphoserine; by MPS1. 2 positions are modified to phosphothreonine; by MPS1: T64 and T68. The span at 67-78 shows a compositional bias: polar residues; the sequence is STRLFSEASQFD. The residue at position 80 (S80) is a Phosphoserine. The span at 96–110 shows a compositional bias: basic and acidic residues; that stretch reads NVDKSRKRNLIDDLK. The stretch at 119–799 forms a coiled coil; that stretch reads LKEQEVREHQ…ILNERRKDND (681 aa). Residue S529 is modified to Phosphoserine. 2 consecutive short sequence motifs (nuclear localization signal) follow at residues 726–731 and 742–747; these read KEKYKR and RLRREK. A calmodulin-binding region spans residues 900-927; it reads SFKTVALLVLACVRMKRIAFYRRSDDNR.

This sequence belongs to the SPC110 family. As to quaternary structure, homodimer. Component of the SPC110 complex containing at least CMD1, SPC29 and SCP110. Interacts with SPC97 and SPC98.

Its subcellular location is the nucleus. The protein localises to the cytoplasm. It localises to the cytoskeleton. It is found in the microtubule organizing center. The protein resides in the spindle pole body. Its function is as follows. Component of the spindle pole body (SPB) required for the proper execution of spindle pole body (SPB) duplication. Potential role in cross-linking filaments or anchoring other molecules. It is essential for growth. The polypeptide is Spindle pole body component 110 (SPC110) (Saccharomyces cerevisiae (strain YJM789) (Baker's yeast)).